The primary structure comprises 103 residues: MTSSDEELKELLKQATTYKQDPRHRIPMVDRPSKILTQSNKCRENKARKCSNCTCNKNTNTNNTIYKSKCGSCHLGDPFRCSSCPYKGLPPFNEGDEINFDEL.

Residues 19 to 103 (KQDPRHRIPM…EGDEINFDEL (85 aa)) are disordered. Residues C42, C50, C53, and C55 each coordinate [2Fe-2S] cluster. The interval 42–55 (CRENKARKCSNCTC) is fe-S binding site A. Positions 70, 73, 81, and 84 each coordinate [4Fe-4S] cluster. Short sequence motifs (cx2C motif) lie at residues 70 to 73 (CGSC) and 81 to 84 (CSSC). A fe-S binding site B region spans residues 70–84 (CGSCHLGDPFRCSSC).

Belongs to the anamorsin family. In terms of assembly, monomer. Interacts with TAH18. Interacts with MIA40. [4Fe-4S] cluster is required as a cofactor.

The protein localises to the cytoplasm. The protein resides in the mitochondrion intermembrane space. Functionally, component of the cytosolic iron-sulfur (Fe-S) protein assembly (CIA) machinery required for the maturation of extramitochondrial Fe-S proteins. Part of an electron transfer chain functioning in an early step of cytosolic Fe-S biogenesis, facilitating the de novo assembly of a [4Fe-4S] cluster on the scaffold complex CFD1-NBP35. Electrons are transferred to DRE2 from NADPH via the FAD- and FMN-containing protein TAH18. TAH18-DRE2 are also required for the assembly of the diferric tyrosyl radical cofactor of ribonucleotide reductase (RNR), probably by providing electrons for reduction during radical cofactor maturation in the catalytic small subunit RNR2. This Enterocytozoon bieneusi (strain H348) (Microsporidian parasite) protein is Fe-S cluster assembly protein DRE2 (DRE2).